The following is a 650-amino-acid chain: Acetyl-coenzyme A synthetase (650 aa).

CoA contacts are provided by residues 191 to 194 (RGGR), Thr-311, and Asn-335. Residues 387 to 389 (GEP), 411 to 416 (DTWWQT), Asp-500, and Arg-515 contribute to the ATP site. Residue Ser-523 participates in CoA binding. Arg-526 contributes to the ATP binding site. Mg(2+) contacts are provided by Val-537, His-539, and Val-542. Arg-584 is a CoA binding site. At Lys-609 the chain carries N6-acetyllysine.

This sequence belongs to the ATP-dependent AMP-binding enzyme family. It depends on Mg(2+) as a cofactor. Post-translationally, acetylated. Deacetylation by the SIR2-homolog deacetylase activates the enzyme.

The catalysed reaction is acetate + ATP + CoA = acetyl-CoA + AMP + diphosphate. Functionally, catalyzes the conversion of acetate into acetyl-CoA (AcCoA), an essential intermediate at the junction of anabolic and catabolic pathways. AcsA undergoes a two-step reaction. In the first half reaction, AcsA combines acetate with ATP to form acetyl-adenylate (AcAMP) intermediate. In the second half reaction, it can then transfer the acetyl group from AcAMP to the sulfhydryl group of CoA, forming the product AcCoA. The chain is Acetyl-coenzyme A synthetase from Shewanella baltica (strain OS195).